A 253-amino-acid polypeptide reads, in one-letter code: 2-dehydro-3-deoxy-D-gluconate 5-dehydrogenase (253 aa).

Position 14 to 38 (14 to 38) interacts with NAD(+); sequence LITGCDTGLGQGMAVGLAEAGCDIV. A substrate-binding site is contributed by S145. Y158 serves as the catalytic Proton acceptor.

Belongs to the short-chain dehydrogenases/reductases (SDR) family.

It carries out the reaction 2-dehydro-3-deoxy-D-gluconate + NAD(+) = 3-deoxy-D-glycero-2,5-hexodiulosonate + NADH + H(+). It participates in glycan metabolism; pectin degradation; 2-dehydro-3-deoxy-D-gluconate from pectin: step 5/5. In terms of biological role, catalyzes the reduction of 2,5-diketo-3-deoxygluconate (DKII or 4,6-dihydroxy-2,5-dioxohexanoate) into 2-keto-3-deoxygluconate (KDG or 2-dehydro-3-deoxygluconate) with a concomitant oxidation of NADH. The polypeptide is 2-dehydro-3-deoxy-D-gluconate 5-dehydrogenase (kduD) (Dickeya dadantii (strain 3937) (Erwinia chrysanthemi (strain 3937))).